The following is a 346-amino-acid chain: Farnesyl diphosphate synthase 1 (346 aa).

Residues K52, R55, and Q90 each coordinate isopentenyl diphosphate. 2 residues coordinate Mg(2+): D97 and D101. The DDXXD motif signature appears at D97 to D101. R106 is a binding site for dimethylallyl diphosphate. An isopentenyl diphosphate-binding site is contributed by R107. 3 residues coordinate dimethylallyl diphosphate: K194, T195, and Q233. Residues D236–D240 carry the DDXXD motif motif. Dimethylallyl diphosphate contacts are provided by K250 and K259.

This sequence belongs to the FPP/GGPP synthase family. It depends on Mg(2+) as a cofactor. The cofactor is Mn(2+). As to expression, highly expressed in shoots.

The enzyme catalyses isopentenyl diphosphate + (2E)-geranyl diphosphate = (2E,6E)-farnesyl diphosphate + diphosphate. It carries out the reaction isopentenyl diphosphate + dimethylallyl diphosphate = (2E)-geranyl diphosphate + diphosphate. Its pathway is isoprenoid biosynthesis; farnesyl diphosphate biosynthesis; farnesyl diphosphate from geranyl diphosphate and isopentenyl diphosphate: step 1/1. The protein operates within isoprenoid biosynthesis; geranyl diphosphate biosynthesis; geranyl diphosphate from dimethylallyl diphosphate and isopentenyl diphosphate: step 1/1. Catalyzes the sequential condensation of isopentenyl pyrophosphate (IPP) with the allylic pyrophosphates, dimethylallyl pyrophosphate (DMAPP), and then with the resultant geranylpyrophosphate (GPP) to the ultimate product farnesyl pyrophosphate (FPP). Has a 4.5 time greater affinity for GPP versus DMAPP. The chain is Farnesyl diphosphate synthase 1 (FDS-1) from Artemisia spiciformis (Spiked big sagebrush).